A 281-amino-acid chain; its full sequence is Undecaprenyl-diphosphatase (281 aa).

8 helical membrane-spanning segments follow: residues 2–22 (FDLIKAIIIGIIEGLTEFLPV), 46–66 (AFSSVFDYSIQLGAIFAVIQL), 93–113 (VIVGVLPAIVFGFALNDFMDA), 115–135 (LMNFWVVSATLIIYGIAFIVI), 152–172 (ITFKLALYIGLFQVLSIVPGT), 190–210 (FVAAEFSFFLSIPVMFGVTFL), 228–248 (IVMLVGFIVSWIVAWFAIKFM), and 259–279 (VFGYYRIIIGAIFLVFGILGI).

It belongs to the UppP family.

It localises to the cell membrane. The enzyme catalyses di-trans,octa-cis-undecaprenyl diphosphate + H2O = di-trans,octa-cis-undecaprenyl phosphate + phosphate + H(+). Functionally, catalyzes the dephosphorylation of undecaprenyl diphosphate (UPP). Confers resistance to bacitracin. This chain is Undecaprenyl-diphosphatase, found in Leuconostoc mesenteroides subsp. mesenteroides (strain ATCC 8293 / DSM 20343 / BCRC 11652 / CCM 1803 / JCM 6124 / NCDO 523 / NBRC 100496 / NCIMB 8023 / NCTC 12954 / NRRL B-1118 / 37Y).